A 48-amino-acid chain; its full sequence is Phospholipase A2 TI-Nh (48 aa).

The active site involves His-25. Asp-26 is a binding site for Ca(2+).

Belongs to the phospholipase A2 family. Group I subfamily. D49 sub-subfamily. As to quaternary structure, monomer. Requires Ca(2+) as cofactor. Expressed by the venom gland.

The protein resides in the secreted. The enzyme catalyses a 1,2-diacyl-sn-glycero-3-phosphocholine + H2O = a 1-acyl-sn-glycero-3-phosphocholine + a fatty acid + H(+). Functionally, phospholipase A2 with weak enzymatic activity, which partially inhibits thrombin enzymatic activity (Ki=73 nM), completely inhibits thrombin-induced platelet aggregation and retards fibrin clot formation (IC(50)=0.2 nM). May exert this anticoagulant effect through a non-enzymatic mechanism. The protein is Phospholipase A2 TI-Nh of Naja haje haje (Egyptian cobra).